The following is a 147-amino-acid chain: UPF0306 protein YhbP (147 aa).

It belongs to the UPF0306 family.

The polypeptide is UPF0306 protein YhbP (Escherichia fergusonii (strain ATCC 35469 / DSM 13698 / CCUG 18766 / IAM 14443 / JCM 21226 / LMG 7866 / NBRC 102419 / NCTC 12128 / CDC 0568-73)).